The following is a 187-amino-acid chain: CASP-like protein 2 (187 aa).

The Cytoplasmic portion of the chain corresponds to 1–24 (MKVSAVETGEISQVSAPRKGMIRG). A helical membrane pass occupies residues 25–45 (LSIMDFILRIVAAIGTLGSAL). Over 46 to 72 (STGTTRETLPFTTQFVKFRAVFDDLPT) the chain is Extracellular. Residues 73-93 (FVFFVTSNSIVCGYLVLSLAL) form a helical membrane-spanning segment. Residues 94-108 (SFFHIIRRSSAAKSR) are Cytoplasmic-facing. The helical transmembrane segment at 109–129 (ILLVFLDTVMFGLLTTGAAAA) threads the bilayer. Residues 130-163 (GTIVYVSHYGNVNANWFPFCGQYNHFCERISGSL) are Extracellular-facing. The helical transmembrane segment at 164-184 (IGSFIAVVIFMIIILMSAVSI) threads the bilayer. Over 185–187 (SKH) the chain is Cytoplasmic.

Belongs to the Casparian strip membrane proteins (CASP) family. In terms of assembly, homodimer and heterodimers.

The protein localises to the cell membrane. In Lotus japonicus (Lotus corniculatus var. japonicus), this protein is CASP-like protein 2.